A 326-amino-acid polypeptide reads, in one-letter code: Vitamin B12 import system permease protein BtuC (326 aa).

A run of 9 helical transmembrane segments spans residues 15–35 (WLLC…CAGE), 61–81 (LAVL…QALF), 88–108 (PGLL…VLLG), 112–132 (LPNW…TLIL), 146–166 (LLAG…AIYF), 184–204 (GGVD…LLWI), 240–260 (GWMV…GLVI), 274–294 (VLLP…DVVA), and 302–322 (ELPI…WLLL).

The protein belongs to the binding-protein-dependent transport system permease family. FecCD subfamily. In terms of assembly, the complex is composed of two ATP-binding proteins (BtuD), two transmembrane proteins (BtuC) and a solute-binding protein (BtuF).

Its subcellular location is the cell inner membrane. Its function is as follows. Part of the ABC transporter complex BtuCDF involved in vitamin B12 import. Involved in the translocation of the substrate across the membrane. This is Vitamin B12 import system permease protein BtuC from Escherichia coli O17:K52:H18 (strain UMN026 / ExPEC).